The primary structure comprises 248 residues: Triosephosphate isomerase (248 aa).

9–11 provides a ligand contact to substrate; it reads NWK. Histidine 94 acts as the Electrophile in catalysis. The active-site Proton acceptor is the glutamate 166. Residues glycine 172, serine 212, and 233–234 each bind substrate; that span reads GG.

The protein belongs to the triosephosphate isomerase family. Homodimer.

Its subcellular location is the cytoplasm. The catalysed reaction is D-glyceraldehyde 3-phosphate = dihydroxyacetone phosphate. The protein operates within carbohydrate biosynthesis; gluconeogenesis. Its pathway is carbohydrate degradation; glycolysis; D-glyceraldehyde 3-phosphate from glycerone phosphate: step 1/1. Its function is as follows. Involved in the gluconeogenesis. Catalyzes stereospecifically the conversion of dihydroxyacetone phosphate (DHAP) to D-glyceraldehyde-3-phosphate (G3P). The sequence is that of Triosephosphate isomerase from Clostridium acetobutylicum (strain ATCC 824 / DSM 792 / JCM 1419 / IAM 19013 / LMG 5710 / NBRC 13948 / NRRL B-527 / VKM B-1787 / 2291 / W).